A 2999-amino-acid polypeptide reads, in one-letter code: TPR and ankyrin repeat-containing protein 1 (2999 aa).

The disordered stretch occupies residues 1–87 (MASTTAGRRW…QPRGSTDSAC (87 aa)). A compositionally biased stretch (low complexity) spans 19-36 (RGPTPRSRAPGAKLSAPE). TPR repeat units lie at residues 144-177 (AMLLCNKSNAFYNLGKWNEAFLAAKECLQWDPTY) and 179-211 (KGYYRAGYSLLHLLQPYEAARMFFEGLRLLQRS). ANK repeat units follow at residues 297–327 (EKYVFIGFYEKLEQVPKLVQWLVSIGANIET), 328–361 (IGPNPLHALMRLCIQARESQLFRWVMDQKPEWKE), 369–405 (AGCTVLHVAAAHFPGYTSRRQTEDVQMLLSFGADPTL), 538–567 (SQDRPLLMCLRHEDFDLAFLLLTKGADPRS), 572–593 (EGDTPLHAALHIFLDINADIGF), and 621–654 (NGNTLMHLLFQKGMLKRTKKLIDLLVKFDINFNL). 4 disordered regions span residues 684-722 (RRKNRQDPAAHLGRLSRSSAPGHTSQLKSQTSFKSLPCG), 773-831 (MPLP…GASQ), 1151-1211 (LEVE…GCVP), and 1318-1344 (WEEDDEEVEADGNYNEEEKATETQTGD). Composition is skewed to polar residues over residues 699-717 (SRSSAPGHTSQLKSQTSFK) and 801-815 (TQRMGSSGCSGNNPV). The segment covering 1151–1164 (LEVEPGKEGPGREE) has biased composition (basic and acidic residues). Positions 1318-1327 (WEEDDEEVEA) are enriched in acidic residues. 2 TPR repeats span residues 1772-1805 (PYEWIIQGDYYAKHQCWKVAAKCYQKGDALEKEK) and 1866-1899 (LGKIRDAAYFYKRSQCFQDAFRCFEQIQEFDLAL).

As to expression, expressed only in the brain. Detected in the hippocampus, hypothalamus and cingulate gyrus.

In Mus musculus (Mouse), this protein is TPR and ankyrin repeat-containing protein 1 (Trank1).